A 111-amino-acid chain; its full sequence is Phosphoribosyl-AMP cyclohydrolase (111 aa).

Asp80 contacts Mg(2+). Cys81 lines the Zn(2+) pocket. Mg(2+) is bound by residues Asp82 and Asp84. The Zn(2+) site is built by Cys97 and Cys104.

It belongs to the PRA-CH family. In terms of assembly, homodimer. It depends on Mg(2+) as a cofactor. The cofactor is Zn(2+).

It localises to the cytoplasm. The enzyme catalyses 1-(5-phospho-beta-D-ribosyl)-5'-AMP + H2O = 1-(5-phospho-beta-D-ribosyl)-5-[(5-phospho-beta-D-ribosylamino)methylideneamino]imidazole-4-carboxamide. Its pathway is amino-acid biosynthesis; L-histidine biosynthesis; L-histidine from 5-phospho-alpha-D-ribose 1-diphosphate: step 3/9. In terms of biological role, catalyzes the hydrolysis of the adenine ring of phosphoribosyl-AMP. This is Phosphoribosyl-AMP cyclohydrolase from Mycobacterium ulcerans (strain Agy99).